The primary structure comprises 365 residues: MDIIETAKLEGHLESQTNDSTNTYTSPTEAVEEEGKNGKGKPKTLSNGLRKGAKKYPDYIQISMPNDSKNKFPLEWWKTGIAFVYALFNLILTTVMITVVHERVPPKELSPPLPDKFFDYFDRVKWAFSVSEINGMVLVGLWITQWLFLRYKSIVGRRFFFIMGTLYLYRCITMYVTTLPVPGMHFQCAPKLNGDSQAKIQRILRLISGGGLSITGSHILCGDFLFSGHTVVLTLTYLFIKEYSPRHFWWYHLVCWLLSAAGIICILVAHEHYTVDVIIAYYITTRLFWWYHSMANEKNLKVSSQTNFLSRAWWFPIFYFFEKNVQGSIPCCFSWPLSWPPGCFKSSCRKYSRVQKIGEDNEKST.

Residues Leu9 to Arg50 are disordered. Positions Glu14–Thr28 are enriched in polar residues. 5 helical membrane passes run Gly80–Val100, Phe128–Phe148, Phe159–Leu179, Ile219–Phe239, and Phe248–Val268. His229 is a catalytic residue. Catalysis depends on residues His272 and Asp276. The chain crosses the membrane as a helical span at residues Tyr273–Trp290. Topologically, residues Tyr291–Thr365 are cytoplasmic. Residues Cys331, Cys332, Cys343, and Cys348 are each lipidated (S-palmitoyl cysteine).

The protein belongs to the sphingomyelin synthase family. Palmitoylated on Cys-331, Cys-332, Cys-343 and Cys-348; which plays an important role in plasma membrane localization. In terms of tissue distribution, highest expression is detected in cortical bone, followed by vertebrae, kidney and liver. Expression levels are very low in spleen, muscle, heart, brown fat and thymus. Expressed in macrophages.

Its subcellular location is the cell membrane. The protein localises to the golgi apparatus membrane. The enzyme catalyses an N-acylsphing-4-enine + a 1,2-diacyl-sn-glycero-3-phosphocholine = a sphingomyelin + a 1,2-diacyl-sn-glycerol. The catalysed reaction is an N-acylsphinganine + a 1,2-diacyl-sn-glycero-3-phosphocholine = an N-acylsphinganine-1-phosphocholine + a 1,2-diacyl-sn-glycerol. It carries out the reaction an N-acyl-(4R)-4-hydroxysphinganine + a 1,2-diacyl-sn-glycero-3-phosphocholine = an N-acyl-(4R)-4-hydroxysphinganine-phosphocholine + a 1,2-diacyl-sn-glycerol. It catalyses the reaction an N-acylsphing-4-enine + a 1,2-diacyl-sn-glycero-3-phosphoethanolamine = an N-acylsphing-4-enine 1-phosphoethanolamine + a 1,2-diacyl-sn-glycerol. The enzyme catalyses an N-acylsphinganine + a 1,2-diacyl-sn-glycero-3-phosphoethanolamine = an N-acylsphinganine-1-phosphoethanolamine + a 1,2-diacyl-sn-glycerol. The catalysed reaction is an N-acyl-(4R)-4-hydroxysphinganine + a 1,2-diacyl-sn-glycero-3-phosphoethanolamine = an N-acyl-(4R)-4-hydroxysphinganine-1-phosphoethanolamine + a 1,2-diacyl-sn-glycerol. It carries out the reaction 1,2-dihexadecanoyl-sn-glycero-3-phosphocholine + an N-acylsphing-4-enine = 1,2-dihexadecanoyl-sn-glycerol + a sphingomyelin. It catalyses the reaction 1-(9Z-octadecenoyl)-2-acyl-sn-3-glycerol + a sphingomyelin = a 1-(9Z-octadecenoyl)-2-acyl-sn-glycero-3-phosphocholine + an N-acylsphing-4-enine. The enzyme catalyses N-hexadecanoylsphinganine + a 1,2-diacyl-sn-glycero-3-phosphocholine = N-hexadecanoyl-sphinganine-1-phosphocholine + a 1,2-diacyl-sn-glycerol. The catalysed reaction is N-hexadecanoyl-(4R)-hydroxysphinganine + a 1,2-diacyl-sn-glycero-3-phosphocholine = N-hexadecanoyl-(4R)-hydroxysphinganine-phosphocholine + a 1,2-diacyl-sn-glycerol. It carries out the reaction N-hexadecanoylsphinganine + a 1,2-diacyl-sn-glycero-3-phosphoethanolamine = N-hexadecanoyl-sphinganine-1-phosphoethanolamine + a 1,2-diacyl-sn-glycerol. It catalyses the reaction N-hexadecanoyl-(4R)-hydroxysphinganine + a 1,2-diacyl-sn-glycero-3-phosphoethanolamine = N-hexadecanoyl-(4R)-hydroxysphinganine-1-phosphoethanolamine + a 1,2-diacyl-sn-glycerol. It participates in sphingolipid metabolism. In terms of biological role, sphingomyelin synthase that primarily contributes to sphingomyelin synthesis and homeostasis at the plasma membrane. Catalyzes the reversible transfer of phosphocholine moiety in sphingomyelin biosynthesis: in the forward reaction transfers phosphocholine head group of phosphatidylcholine (PC) on to ceramide (CER) to form ceramide phosphocholine (sphingomyelin, SM) and diacylglycerol (DAG) as by-product, and in the reverse reaction transfers phosphocholine from SM to DAG to form PC and CER. The direction of the reaction appears to depend on the levels of CER and DAG in the plasma membrane. Does not use free phosphorylcholine or CDP-choline as donors. Can also transfer phosphoethanolamine head group of phosphatidylethanolamine (PE) on to ceramide (CER) to form ceramide phosphoethanolamine (CPE). Regulates receptor-mediated signal transduction via mitogenic DAG and proapoptotic CER, as well as via SM, a structural component of membrane rafts that serve as platforms for signal transduction and protein sorting. To a lesser extent, plays a role in secretory transport via regulation of DAG pool at the Golgi apparatus and its downstream effects on PRKD1. Required for normal bone matrix mineralization. In Mus musculus (Mouse), this protein is Phosphatidylcholine:ceramide cholinephosphotransferase 2 (Sgms2).